A 176-amino-acid chain; its full sequence is Isopentenyl-diphosphate Delta-isomerase (176 aa).

H22 and H28 together coordinate Mn(2+). In terms of domain architecture, Nudix hydrolase spans 26 to 160; the sequence is LRHKAISVFI…PETFTPWLHI (135 aa). The active site involves C62. Residue H64 coordinates Mn(2+). E82 provides a ligand contact to Mg(2+). Residues E108 and E110 each coordinate Mn(2+). E110 is an active-site residue.

This sequence belongs to the IPP isomerase type 1 family. It depends on Mg(2+) as a cofactor. The cofactor is Mn(2+).

The protein localises to the cytoplasm. The enzyme catalyses isopentenyl diphosphate = dimethylallyl diphosphate. It functions in the pathway isoprenoid biosynthesis; dimethylallyl diphosphate biosynthesis; dimethylallyl diphosphate from isopentenyl diphosphate: step 1/1. It participates in porphyrin-containing compound metabolism; chlorophyll biosynthesis. Its function is as follows. Catalyzes the 1,3-allylic rearrangement of the homoallylic substrate isopentenyl (IPP) to its highly electrophilic allylic isomer, dimethylallyl diphosphate (DMAPP). The chain is Isopentenyl-diphosphate Delta-isomerase from Jannaschia sp. (strain CCS1).